We begin with the raw amino-acid sequence, 87 residues long: Phosphoribosyl-ATP pyrophosphatase (87 aa).

This sequence belongs to the PRA-PH family.

Its subcellular location is the cytoplasm. It carries out the reaction 1-(5-phospho-beta-D-ribosyl)-ATP + H2O = 1-(5-phospho-beta-D-ribosyl)-5'-AMP + diphosphate + H(+). It functions in the pathway amino-acid biosynthesis; L-histidine biosynthesis; L-histidine from 5-phospho-alpha-D-ribose 1-diphosphate: step 2/9. This chain is Phosphoribosyl-ATP pyrophosphatase, found in Nocardia farcinica (strain IFM 10152).